A 291-amino-acid polypeptide reads, in one-letter code: N-acetylmannosamine kinase (291 aa).

ATP is bound by residues 5–12 (AIDIGGTK) and 132–139 (GVGGGVVS). Positions 156, 166, 168, and 173 each coordinate Zn(2+).

It belongs to the ROK (NagC/XylR) family. NanK subfamily. Homodimer.

The enzyme catalyses an N-acyl-D-mannosamine + ATP = an N-acyl-D-mannosamine 6-phosphate + ADP + H(+). It participates in amino-sugar metabolism; N-acetylneuraminate degradation; D-fructose 6-phosphate from N-acetylneuraminate: step 2/5. In terms of biological role, catalyzes the phosphorylation of N-acetylmannosamine (ManNAc) to ManNAc-6-P. The polypeptide is N-acetylmannosamine kinase (Escherichia coli O7:K1 (strain IAI39 / ExPEC)).